A 304-amino-acid chain; its full sequence is tRNA-5-methyluridine(54) 2-sulfurtransferase (304 aa).

The Zn(2+) site is built by C3, C6, C22, and H25. ATP-binding residues include A53 and I79. 2 residues coordinate [4Fe-4S] cluster: C131 and C134. ATP is bound by residues R138 and G157. Residue C224 participates in [4Fe-4S] cluster binding. Residues C274, C277, C286, and C289 each coordinate Zn(2+).

Belongs to the TtcA family. TtuA subfamily. Homodimer. [4Fe-4S] cluster serves as cofactor. Requires Mg(2+) as cofactor.

The enzyme catalyses 5-methyluridine(54) in tRNA + hydrogen sulfide + ATP = 5-methyl-2-thiouridine(54) in tRNA + AMP + diphosphate. The protein operates within tRNA modification. Functionally, catalyzes the ATP-dependent 2-thiolation of 5-methyluridine residue at position 54 in the T loop of tRNAs, leading to 5-methyl-2-thiouridine (m(5)s(2)U or s(2)T). This modification allows thermal stabilization of tRNAs in thermophilic microorganisms, and is required for cell growth at high temperatures. Can use free sulfide as sulfur source in vitro. The chain is tRNA-5-methyluridine(54) 2-sulfurtransferase from Thermotoga maritima (strain ATCC 43589 / DSM 3109 / JCM 10099 / NBRC 100826 / MSB8).